A 571-amino-acid polypeptide reads, in one-letter code: Quinone-dependent D-lactate dehydrogenase (571 aa).

Residues 44 to 273 enclose the FAD-binding PCMH-type domain; it reads GGGPVFAVVR…FAVRTRTFPR (230 aa). Residues 78–82, 86–87, Gly-145, Ser-152, Gly-162, and Val-263 each bind FAD; these read ASNTG and GS.

It belongs to the quinone-dependent D-lactate dehydrogenase family. FAD serves as cofactor.

The protein resides in the cell membrane. It catalyses the reaction (R)-lactate + a quinone = a quinol + pyruvate. Functionally, catalyzes the oxidation of D-lactate to pyruvate. Also has weak activity with L-lactate and DL-2-hydroxybutyrate. Electrons derived from D-lactate oxidation enter the electron transport chain. Essential for growth with D-lactate as sole carbon and energy source. The protein is Quinone-dependent D-lactate dehydrogenase of Corynebacterium glutamicum (strain ATCC 13032 / DSM 20300 / JCM 1318 / BCRC 11384 / CCUG 27702 / LMG 3730 / NBRC 12168 / NCIMB 10025 / NRRL B-2784 / 534).